We begin with the raw amino-acid sequence, 525 residues long: Heat shock factor protein 1 (525 aa).

Met1 carries the post-translational modification N-acetylmethionine. The interval Val15–Thr120 is DNA-binding domain. Lys80 is modified (N6-acetyllysine). An N6-acetyllysine; alternate modification is found at Lys91. Lys91 participates in a covalent cross-link: Glycyl lysine isopeptide (Lys-Gly) (interchain with G-Cter in SUMO2); alternate. N6-acetyllysine is present on Lys118. Position 121 is a phosphoserine; by MAPKAPK2 (Ser121). Residues Lys126 and Lys131 each participate in a glycyl lysine isopeptide (Lys-Gly) (interchain with G-Cter in SUMO2) cross-link. The hydrophobic repeat HR-A/B stretch occupies residues Ile130–Leu203. Residue Thr142 is modified to Phosphothreonine; by CK2. 2 positions are modified to N6-acetyllysine: Lys150 and Lys188. Positions Leu203–Lys224 are d domain. Lys208 is modified (N6-acetyllysine; alternate). Lys208 participates in a covalent cross-link: Glycyl lysine isopeptide (Lys-Gly) (interchain with G-Cter in SUMO2); alternate. The residue at position 216 (Ser216) is a Phosphoserine; by PLK1. The segment at Ser221–Val310 is regulatory domain. Residue Lys224 forms a Glycyl lysine isopeptide (Lys-Gly) (interchain with G-Cter in SUMO2) linkage. Ser230 bears the Phosphoserine; by CAMK2A mark. 2 disordered regions span residues Ala272 to Pro327 and Pro340 to Thr365. 2 positions are modified to phosphoserine: Ser275 and Ser292. Lys298 bears the N6-acetyllysine; alternate mark. Residue Lys298 forms a Glycyl lysine isopeptide (Lys-Gly) (interchain with G-Cter in SUMO2); alternate linkage. Lys298 participates in a covalent cross-link: Glycyl lysine isopeptide (Lys-Gly) (interchain with G-Cter in SUMO); alternate. Phosphoserine is present on residues Ser303, Ser307, Ser314, and Ser319. Phosphoserine; by PKA is present on Ser320. Thr323 is subject to Phosphothreonine. Position 326 is a phosphoserine; by MAPK12 (Ser326). Positions Ala343–Ala355 are enriched in polar residues. Phosphoserine is present on Ser345. A transactivation domain region spans residues Glu367–Ser525. The hydrophobic repeat HR-C stretch occupies residues Leu380–Val405. The 9aaTAD signature appears at Ser408–Pro416. Phosphoserine; by PLK1 is present on Ser415. Ser440 bears the Phosphoserine mark. 2 disordered regions span residues Pro441–Gln460 and Tyr495–Ser525. The span at Glu515–Ser525 shows a compositional bias: basic and acidic residues. Lys520 bears the N6-acetyllysine mark.

Belongs to the HSF family. Monomer; cytoplasmic latent and transcriptionally inactive monomeric form in unstressed cells. Homotrimer; in response to stress, such as heat shock, homotrimerizes and translocates into the nucleus, binds to heat shock element (HSE) sequences in promoter of heat shock protein (HSP) genes and acquires transcriptional ability. Interacts (via monomeric form) with FKBP4; this interaction occurs in unstressed cells. Associates (via monomeric form) with HSP90 proteins in a multichaperone complex in unnstressed cell; this association maintains HSF1 in a non-DNA-binding and transcriptional inactive form by preventing HSF1 homotrimerization. Homotrimeric transactivation activity is modulated by protein-protein interactions and post-translational modifications. Interacts with HSP90AA1; this interaction is decreased in a IER5-dependent manner, promoting HSF1 accumulation in the nucleus, homotrimerization and DNA-binding activities. Part (via regulatory domain in the homotrimeric form) of a large heat shock-induced HSP90-dependent multichaperone complex at least composed of FKBP4, FKBP5, HSP90 proteins, PPID, PPP5C and PTGES3; this association maintains the HSF1 homotrimeric DNA-bound form in a transcriptionally inactive form. Interacts with BAG3 (via BAG domain); this interaction occurs in normal and heat-shocked cells promoting nuclear shuttling of HSF1 in a BAG3-dependent manner. Interacts (via homotrimeric and hyperphosphorylated form) with FKBP4; this interaction occurs upon heat shock in a HSP90-dependent multichaperone complex. Interacts (via homotrimeric form preferentially) with EEF1A proteins. In heat shocked cells, stress-denatured proteins compete with HSF1 homotrimeric DNA-bound form for association of the HSP90-dependent multichaperone complex, and hence alleviating repression of HSF1-mediated transcriptional activity. Interacts (via homotrimeric form preferentially) with DAXX; this interaction relieves homotrimeric HSF1 from repression of its transcriptional activity by HSP90-dependent multichaperone complex upon heat shock. Interacts (via D domain and preferentially with hyperphosphorylated form) with JNK1; this interaction occurs under both normal growth conditions and immediately upon heat shock. Interacts (via D domain and preferentially with hyperphosphorylated form) with MAPK3; this interaction occurs upon heat shock. Interacts with IER5 (via central region); this interaction promotes PPP2CA-induced dephosphorylation on Ser-121, Ser-307, Ser-314 and Thr-323 and HSF1 transactivation activity. Found in a ribonucleoprotein complex composed of the HSF1 homotrimeric form, translation elongation factor eEF1A proteins and non-coding RNA heat shock RNA-1 (HSR1); this complex occurs upon heat shock and stimulates HSF1 DNA-binding activity. Interacts (via transactivation domain) with HSPA1A/HSP70 and DNAJB1; these interactions result in the inhibition of heat shock- and HSF1-induced transcriptional activity during the attenuation and recovery phase from heat shock. Interacts (via Ser-303 and Ser-307 phosphorylated form) with YWHAE; this interaction promotes HSF1 sequestration in the cytoplasm in an ERK-dependent manner. Found in a complex with IER5 and PPP2CA. Interacts with TPR; this interaction increases upon heat shock and stimulates export of HSP70 mRNA. Interacts with SYMPK (via N-terminus) and CSTF2; these interactions occur upon heat shock. Interacts (via transactivation domain) with HSPA8. Interacts with EEF1D; this interaction occurs at heat shock promoter element (HSE) sequences. Interacts with MAPKAPK2. Interacts with PRKACA/PKA. Interacts (via transactivation domain) with GTF2A2. Interacts (via transactivation domain) with GTF2B. Interacts (via transactivation domain) with TBP. Interacts with CDK9, CCNT1 and EP300. Interacts (via N-terminus) with XRCC5 (via N-terminus) and XRCC6 (via N-terminus); these interactions are direct and prevent XRCC5/XRCC6 heterodimeric binding and non-homologous end joining (NHEJ) repair activities induced by ionizing radiation (IR). Interacts with PLK1; this interaction occurs during the early mitotic period, increases upon heat shock but does not modulate neither HSF1 homotrimerization and DNA-binding activities. Interacts (via Ser-216 phosphorylated form) with CDC20; this interaction occurs in mitosis in a MAD2L1-dependent manner and prevents PLK1-stimulated degradation of HSF1 by blocking the recruitment of the SCF(BTRC) ubiquitin ligase complex. Interacts with MAD2L1; this interaction occurs in mitosis. Interacts with BTRC; this interaction occurs during mitosis, induces its ubiquitin-dependent degradation following stimulus-dependent phosphorylation at Ser-216, a process inhibited by CDC20. Interacts with HSP90AA1 and HSP90AB1. Forms a complex with TTC5/STRAP and p300/EP300; these interactions augment chromatin-bound HSF1 and p300/EP300 histone acetyltransferase activity. Post-translationally, phosphorylated. Phosphorylated in unstressed cells; this phosphorylation is constitutive and implicated in the repression of HSF1 transcriptional activity. Phosphorylated on Ser-121 by MAPKAPK2; this phosphorylation promotes interaction with HSP90 proteins and inhibits HSF1 homotrimerization, DNA-binding and transactivation activities. Phosphorylation on Ser-303 by GSK3B/GSK3-beat and on Ser-307 by MAPK3 within the regulatory domain is involved in the repression of HSF1 transcriptional activity and occurs in a RAF1-dependent manner. Phosphorylation on Ser-303 and Ser-307 increases HSF1 nuclear export in a YWHAE- and XPO1/CRM1-dependent manner. Phosphorylation on Ser-307 is a prerequisite for phosphorylation on Ser-303. According to, Ser-303 is not phosphorylated in unstressed cells. Phosphorylated on Ser-415 by PLK1; phosphorylation promotes nuclear translocation upon heat shock. Hyperphosphorylated upon heat shock and during the attenuation and recovery phase period of the heat shock response. Phosphorylated on Thr-142; this phosphorylation increases HSF1 transactivation activity upon heat shock. Phosphorylation on Ser-230 by CAMK2A; this phosphorylation enhances HSF1 transactivation activity upon heat shock. Phosphorylation on Ser-326 by MAPK12; this phosphorylation enhances HSF1 nuclear translocation, homotrimerization and transactivation activities upon heat shock. Phosphorylated on Ser-320 by PRKACA/PKA; this phosphorylation promotes nuclear localization and transcriptional activity upon heat shock. Phosphorylated by MAPK8; this phosphorylation occurs upon heat shock, induces HSF1 translocation into nuclear stress bodies and negatively regulates transactivation activity. Neither basal nor stress-inducible phosphorylation on Ser-230, Ser-292, Ser-303, Ser-307, Ser-314, Ser-319, Ser-320, Thr-323, Ser-326, Ser-338, Ser-345, Ser-364 and Thr-365 within the regulatory domain is involved in the regulation of HSF1 subcellular localization or DNA-binding activity; however, it negatively regulates HSF1 transactivation activity. Phosphorylated on Ser-216 by PLK1 in the early mitotic period; this phosphorylation regulates HSF1 localization to the spindle pole, the recruitment of the SCF(BTRC) ubiquitin ligase complex inducing HSF1 degradation, and hence mitotic progression. Dephosphorylated on Ser-121, Ser-307, Ser-314 and Thr-323 by phosphatase PPP2CA in an IER5-dependent manner, leading to HSF1-mediated transactivation activity. Sumoylated with SUMO1 and SUMO2 upon heat shock in a ERK2-dependent manner. Sumoylated by SUMO1 on Lys-298; sumoylation occurs upon heat shock and promotes its localization to nuclear stress bodies and DNA-binding activity. Phosphorylation on Ser-303 and Ser-307 is probably a prerequisite for sumoylation. In terms of processing, acetylated on Lys-118; this acetylation is decreased in a IER5-dependent manner. Acetylated on Lys-118, Lys-208 and Lys-298; these acetylations occur in a EP300-dependent manner. Acetylated on Lys-80; this acetylation inhibits DNA-binding activity upon heat shock. Deacetylated on Lys-80 by SIRT1; this deacetylation increases DNA-binding activity. Post-translationally, ubiquitinated by SCF(BTRC) and degraded following stimulus-dependent phosphorylation at Ser-216 by PLK1 in mitosis. Polyubiquitinated. Undergoes proteasomal degradation upon heat shock and during the attenuation and recovery phase period of the heat shock response.

It is found in the nucleus. The protein resides in the cytoplasm. The protein localises to the nucleoplasm. It localises to the perinuclear region. Its subcellular location is the cytoskeleton. It is found in the spindle pole. The protein resides in the microtubule organizing center. The protein localises to the centrosome. It localises to the chromosome. Its subcellular location is the centromere. It is found in the kinetochore. Functions as a stress-inducible and DNA-binding transcription factor that plays a central role in the transcriptional activation of the heat shock response (HSR), leading to the expression of a large class of molecular chaperones, heat shock proteins (HSPs), that protect cells from cellular insult damage. In unstressed cells, is present in a HSP90-containing multichaperone complex that maintains it in a non-DNA-binding inactivated monomeric form. Upon exposure to heat and other stress stimuli, undergoes homotrimerization and activates HSP gene transcription through binding to site-specific heat shock elements (HSEs) present in the promoter regions of HSP genes. Upon heat shock stress, forms a chromatin-associated complex with TTC5/STRAP and p300/EP300 to stimulate HSR transcription, therefore increasing cell survival. Activation is reversible, and during the attenuation and recovery phase period of the HSR, returns to its unactivated form. Binds to inverted 5'-NGAAN-3' pentamer DNA sequences. Binds to chromatin at heat shock gene promoters. Activates transcription of transcription factor FOXR1 which in turn activates transcription of the heat shock chaperones HSPA1A and HSPA6 and the antioxidant NADPH-dependent reductase DHRS2. Binds the promoter region upstream of exon 1 of Mpv17l to activate expression of the M-LPS isoform which is involved in metabolism of reactive oxygen species. Also serves several other functions independently of its transcriptional activity. Involved in the repression of Ras-induced transcriptional activation of the c-fos gene in heat-stressed cells. Positively regulates pre-mRNA 3'-end processing and polyadenylation of HSP70 mRNA upon heat-stressed cells in a symplekin (SYMPK)-dependent manner. Plays a role in nuclear export of stress-induced HSP70 mRNA. Plays a role in the regulation of mitotic progression. Also plays a role as a negative regulator of non-homologous end joining (NHEJ) repair activity in a DNA damage-dependent manner. Involved in stress-induced cancer cell proliferation in a IER5-dependent manner. This is Heat shock factor protein 1 from Mus musculus (Mouse).